Here is a 901-residue protein sequence, read N- to C-terminus: ABC transporter A family member 8 (901 aa).

7 helical membrane-spanning segments follow: residues 34–54 (LITIPFFLCLLLLVIQMLFDT), 315–335 (IASLIGPLFFTWVILLLFPVI), 369–389 (FLLISILYMLCFAIFGSLIGL), 402–422 (VFFFICINLQISVAFLASAMF), 427–447 (TATVIAYIYVFGTGLLGIFLF), 460–477 (WIIAMELYPGFSLYRGLY), and 508–528 (CIMLIEWLLLLGLAYYIDQII). Positions 586–823 (VLCNNLKKVY…YGGSYVLTVT (238 aa)) constitute an ABC transporter domain. 624 to 631 (GPNGAGKT) provides a ligand contact to ATP.

Belongs to the ABC transporter superfamily. ABCA family. CPR flippase (TC 3.A.1.211) subfamily.

It is found in the membrane. This is ABC transporter A family member 8 (ABCA8) from Arabidopsis thaliana (Mouse-ear cress).